Here is a 68-residue protein sequence, read N- to C-terminus: Large ribosomal subunit protein bL35 (68 aa).

Basic residues-rich tracts occupy residues 1–15 (MPKMKSHSGTKKRFK) and 23–38 (TARKAGKRHLNEHKSS). The disordered stretch occupies residues 1 to 38 (MPKMKSHSGTKKRFKVTGSGKVTARKAGKRHLNEHKSS).

This sequence belongs to the bacterial ribosomal protein bL35 family.

The sequence is that of Large ribosomal subunit protein bL35 from Cutibacterium acnes (strain DSM 16379 / KPA171202) (Propionibacterium acnes).